The following is a 401-amino-acid chain: Argininosuccinate synthase (401 aa).

ATP is bound at residue 9 to 17 (AYSGGLDTS). Tyr-88 serves as a coordination point for L-citrulline. An ATP-binding site is contributed by Gly-118. L-aspartate is bound by residues Thr-120, Asn-124, and Asp-125. Position 124 (Asn-124) interacts with L-citrulline. L-citrulline contacts are provided by Arg-128, Ser-176, Ser-185, Glu-261, and Tyr-273.

The protein belongs to the argininosuccinate synthase family. Type 1 subfamily. As to quaternary structure, homotetramer.

It localises to the cytoplasm. The enzyme catalyses L-citrulline + L-aspartate + ATP = 2-(N(omega)-L-arginino)succinate + AMP + diphosphate + H(+). It participates in amino-acid biosynthesis; L-arginine biosynthesis; L-arginine from L-ornithine and carbamoyl phosphate: step 2/3. This chain is Argininosuccinate synthase, found in Symbiobacterium thermophilum (strain DSM 24528 / JCM 14929 / IAM 14863 / T).